A 51-amino-acid polypeptide reads, in one-letter code: Lantibiotic streptococcin A-FF22 (51 aa).

Residues 1-25 (MEKNNEVINSIQEVSLEELDQIIGA) constitute a propeptide that is removed on maturation. 2 cross-links (beta-methyllanthionine (Thr-Cys)) span residues 33 to 38 (TISHEC) and 42 to 50 (TWAFLATCC). The lanthionine (Ser-Cys) cross-link spans 35–49 (SHECHLNTWAFLATC). A 2,3-didehydrobutyrine modification is found at threonine 48.

The protein belongs to the type A lantibiotic family. Maturation of lantibiotics involves the enzymatic conversion of Thr, and Ser into dehydrated AA and the formation of thioether bonds with cysteine. This is followed by membrane translocation and cleavage of the modified precursor.

It localises to the secreted. It is found in the cell surface. Its function is as follows. Lanthionine-containing peptide antibiotic (lantibiotic) active on certain Gram-positive bacteria. The bactericidal activity of lantibiotics is based on depolarization of energized bacterial cytoplasmic membranes, initiated by the formation of aqueous transmembrane pores. This chain is Lantibiotic streptococcin A-FF22 (scnA), found in Streptococcus pyogenes.